Consider the following 477-residue polypeptide: MVDKTHETEFSKKQLEASSSGHGGVLIDAEENGIHDQAEQRSCLICGDRATGLHYGIISCEGCKGFFKRSICNKRVYRCSRDKNCEMSRKQRNRCQYCRLLKCLQMGMNRKAIREDGMPGGRNKSIGPVQISDEEIERIMSGQEFKDEANMPEHTWGNNGDSDHSSPGNGVSDGNQPSPVSTLSSNRSVELNGYTTALREQYIGNAMAQHYQFLPHLFGYAAQPRSLYPQSHTLIGQLVAAEDLAPLGTPMLIEDGYRVTQVELFALLCRLADELLFRQISWIKKLPFFCDLSIEDYTRLLSATWQELILLACLTVYSAQVLGDLANVTHKYTPSDDELHSFSEDGMEVMEKLIYLFRKFHQLKVSNEEYACMKAINFLNQDIRGLTNVTQLEQLNKRYWYVCQDYTEYKYPHQPKRFPEIMMCLPEIRCIAGKLVNIPLEQLPLLFKAVLHSCKSSLSSYRTSSSPCVTKGTAPAN.

The nuclear receptor DNA-binding region spans 40–115 (QRSCLICGDR…MGMNRKAIRE (76 aa)). 2 NR C4-type zinc fingers span residues 43 to 63 (CLICGDRATGLHYGIISCEGC) and 79 to 98 (CSRDKNCEMSRKQRNRCQYC). Positions 147–187 (DEANMPEHTWGNNGDSDHSSPGNGVSDGNQPSPVSTLSSNR) are disordered. Over residues 156–187 (WGNNGDSDHSSPGNGVSDGNQPSPVSTLSSNR) the composition is skewed to polar residues. An NR LBD domain is found at 230–461 (QSHTLIGQLV…HSCKSSLSSY (232 aa)).

The protein belongs to the nuclear hormone receptor family. NR6 subfamily. Homodimer. In terms of tissue distribution, expressed in germ cells, being predominant in previtellogenic oocytes in the ovary and in spermatocytes in the testis.

The protein resides in the nucleus. Probable orphan nuclear receptor. Binds to a response element containing repeats of the motif 5'-AGGTCA-3'. The protein is Nuclear receptor subfamily 6 group A member 1-A of Danio rerio (Zebrafish).